Consider the following 703-residue polypeptide: Calpain-8 (703 aa).

A Calpain catalytic domain is found at 45–344 (LFKDPEFPAC…YSRLEICNLS (300 aa)). Catalysis depends on residues Cys-105, His-262, and Asn-286. A domain III region spans residues 355–512 (KWNLVLFNGR…VFSEKKAKAL (158 aa)). The tract at residues 513 to 531 (EIGDTVSGHPHEPHPRDMD) is linker. 4 EF-hand domains span residues 532-566 (EEDEHVRSLFEEFVGKDSEISANQLKRVLNEVLSK), 575-608 (FNINTCREMISLLDSDGTGSLGPMEFKTLWLKIR), 605-640 (LKIRTYLEIFQEMDHNHVGTIEAHEMRTALKKAGFT), and 670-703 (IRLETLFKLFRLLDKDQNGIVQLSLAEWLCCVLV). The tract at residues 532-703 (EEDEHVRSLF…LAEWLCCVLV (172 aa)) is domain IV. The Ca(2+) site is built by Asp-588, Asp-590, Thr-592, Ser-594, Glu-599, Asp-618, Asn-620, Thr-624, and Glu-629.

This sequence belongs to the peptidase C2 family. In terms of assembly, monomer and homooligomer. Interacts with COPS1/GPS1, COPB1, EYA2, NME2, NME4 and TOMM70. Ca(2+) serves as cofactor. Undergoes autolytic cleavage between Ala-5 and Ala-6 which gives rise to fragments extending from Ala-6 to the C-terminus, Ala-6 to the EF-hand 2 domain and from Ala-6 to the beginning of domain III. In terms of tissue distribution, predominantly expressed in the stomach. Localizes strictly to the surface mucus cells in the gastric epithelium and the mucus-secreting goblet cells in the duodenum. Detected in the pituitary after estrogen stimulation.

It localises to the cytoplasm. The protein resides in the golgi apparatus. It catalyses the reaction Broad endopeptidase specificity.. In terms of biological role, calcium-regulated non-lysosomal thiol-protease. Involved in membrane trafficking in the gastric surface mucus cells (pit cells) and may involve the membrane trafficking of mucus cells via interactions with coat protein. Proteolytically cleaves the beta-subunit of coatomer complex. This is Calpain-8 (Capn8) from Rattus norvegicus (Rat).